A 413-amino-acid polypeptide reads, in one-letter code: Multifunctional CCA protein (413 aa).

The ATP site is built by Gly8 and Arg11. CTP-binding residues include Gly8 and Arg11. Residues Asp21 and Asp23 each contribute to the Mg(2+) site. ATP contacts are provided by Arg91, Arg137, and Arg140. CTP contacts are provided by Arg91, Arg137, and Arg140. One can recognise an HD domain in the interval 228 to 329; sequence TGKHTLLSLK…VSLFDKGDFW (102 aa).

The protein belongs to the tRNA nucleotidyltransferase/poly(A) polymerase family. Bacterial CCA-adding enzyme type 1 subfamily. Monomer. Can also form homodimers and oligomers. Requires Mg(2+) as cofactor. The cofactor is Ni(2+).

It catalyses the reaction a tRNA precursor + 2 CTP + ATP = a tRNA with a 3' CCA end + 3 diphosphate. It carries out the reaction a tRNA with a 3' CCA end + 2 CTP + ATP = a tRNA with a 3' CCACCA end + 3 diphosphate. Its function is as follows. Catalyzes the addition and repair of the essential 3'-terminal CCA sequence in tRNAs without using a nucleic acid template. Adds these three nucleotides in the order of C, C, and A to the tRNA nucleotide-73, using CTP and ATP as substrates and producing inorganic pyrophosphate. tRNA 3'-terminal CCA addition is required both for tRNA processing and repair. Also involved in tRNA surveillance by mediating tandem CCA addition to generate a CCACCA at the 3' terminus of unstable tRNAs. While stable tRNAs receive only 3'-terminal CCA, unstable tRNAs are marked with CCACCA and rapidly degraded. The sequence is that of Multifunctional CCA protein from Shewanella denitrificans (strain OS217 / ATCC BAA-1090 / DSM 15013).